A 579-amino-acid polypeptide reads, in one-letter code: Mycobactin import ATP-binding/permease protein IrtB (579 aa).

Over 1-16 (MIRTWIALVPNDHRAR) the chain is Cytoplasmic. Residues 17–37 (LIGFALLAFCSVVARAVGTVL) form a helical membrane-spanning segment. The 283-residue stretch at 17–299 (LIGFALLAFC…VSELAPALES (283 aa)) folds into the ABC transmembrane type-1 domain. Over 38–52 (LVPLMAALFGEAPQR) the chain is Periplasmic. A helical transmembrane segment spans residues 53–73 (AWLWLGWLSAATVAGWVLDAV). Residues 74 to 123 (TARIGIELGFAVLNHTQHDVADRLPVVRLDWFTAENTATARQAIAATGPE) are Cytoplasmic-facing. Residues 124 to 146 (LVGLVVNLVTPLTSAILLPAVIA) form a helical membrane-spanning segment. Residues 147 to 155 (LALLPISWQ) are Periplasmic-facing. Residues 156 to 178 (LGVAALAGVPLLLGALWASAAFA) traverse the membrane as a helical segment. Residues 179 to 237 (RRADTAADKANTALTERIIEFARTQQALRAARRVEPARSLVGNALASQHTATMRLLGMQ) are Cytoplasmic-facing. A helical transmembrane segment spans residues 238–258 (IPGQLLFSIASQLALIVLAGT). The Periplasmic segment spans residues 259-579 (TAALTITGTL…EAAEWQILAE (321 aa)). The ABC transporter domain occupies 332–567 (IEFDDVAFGY…GGRFSQFWRQ (236 aa)). Residue 366–373 (GPSGCGKS) participates in ATP binding.

Belongs to the ABC transporter superfamily. Siderophore-Fe(3+) uptake transporter (SIUT) (TC 3.A.1.21) family. Forms a heterodimer with IrtA.

The protein resides in the cell inner membrane. Functionally, part of the ABC transporter complex IrtAB involved in the import of iron-bound mycobactin (Fe-MBT) and carboxymycobactin (Fe-cMBT). Transmembrane domains (TMD) form a pore in the membrane and the ATP-binding domain (NBD) is responsible for energy generation. The sequence is that of Mycobactin import ATP-binding/permease protein IrtB (irtB) from Mycobacterium bovis (strain ATCC BAA-935 / AF2122/97).